The following is a 219-amino-acid chain: Cytidylate kinase (219 aa).

Position 21 to 29 (21 to 29) interacts with ATP; that stretch reads GPAASGKGT.

Belongs to the cytidylate kinase family. Type 1 subfamily.

It localises to the cytoplasm. The enzyme catalyses CMP + ATP = CDP + ADP. It catalyses the reaction dCMP + ATP = dCDP + ADP. The chain is Cytidylate kinase from Rickettsia conorii (strain ATCC VR-613 / Malish 7).